Here is a 752-residue protein sequence, read N- to C-terminus: Phosphoribosylformylglycinamidine synthase subunit PurL (752 aa).

H58 is an active-site residue. Residues Y61 and K103 each coordinate ATP. E105 is a binding site for Mg(2+). Residues 106–109 (SHNH) and R128 each bind substrate. The active-site Proton acceptor is the H107. D129 contributes to the Mg(2+) binding site. A substrate-binding site is contributed by Q253. D281 serves as a coordination point for Mg(2+). 325–327 (ESQ) lines the substrate pocket. ATP-binding residues include D513 and G550. Residue N551 coordinates Mg(2+). S553 is a binding site for substrate.

It belongs to the FGAMS family. Monomer. Part of the FGAM synthase complex composed of 1 PurL, 1 PurQ and 2 PurS subunits.

The protein resides in the cytoplasm. The catalysed reaction is N(2)-formyl-N(1)-(5-phospho-beta-D-ribosyl)glycinamide + L-glutamine + ATP + H2O = 2-formamido-N(1)-(5-O-phospho-beta-D-ribosyl)acetamidine + L-glutamate + ADP + phosphate + H(+). It functions in the pathway purine metabolism; IMP biosynthesis via de novo pathway; 5-amino-1-(5-phospho-D-ribosyl)imidazole from N(2)-formyl-N(1)-(5-phospho-D-ribosyl)glycinamide: step 1/2. Its function is as follows. Part of the phosphoribosylformylglycinamidine synthase complex involved in the purines biosynthetic pathway. Catalyzes the ATP-dependent conversion of formylglycinamide ribonucleotide (FGAR) and glutamine to yield formylglycinamidine ribonucleotide (FGAM) and glutamate. The FGAM synthase complex is composed of three subunits. PurQ produces an ammonia molecule by converting glutamine to glutamate. PurL transfers the ammonia molecule to FGAR to form FGAM in an ATP-dependent manner. PurS interacts with PurQ and PurL and is thought to assist in the transfer of the ammonia molecule from PurQ to PurL. This Streptomyces coelicolor (strain ATCC BAA-471 / A3(2) / M145) protein is Phosphoribosylformylglycinamidine synthase subunit PurL.